Consider the following 267-residue polypeptide: Protein TIFY 7 (267 aa).

In terms of domain architecture, Tify spans 113–148; sequence SSGSSPQLTIFYGGTISVFNDISPDKAQAIMLCAGN. The Jas signature appears at 220 to 244; sequence PQARKASLARFLEKRKERLMSAMPY. A Nuclear localization signal motif is present at residues 222–229; that stretch reads ARKASLAR.

It belongs to the TIFY/JAZ family. As to quaternary structure, homo- and heterodimer. Interacts with MYC2, MYC3, MYC4, COI1, AFPH2/NINJA, TIFY10A/JAZ1, TIFY10B/JAZ2, TIFY6B/JAZ3, TIFY5A/JAZ8, TIFY9/JAZ10 and TIFY3A/JAZ11. Interacts with RHD6 and RSL1. Ubiquitinated. Targeted for degradation by the SCF(COI1) E3 ubiquitin ligase-proteasome pathway during jasmonate signaling.

The protein localises to the nucleus. In terms of biological role, repressor of jasmonate responses. Jasmonoyl-isoleucine (JA-Ile) specifically promotes COI1-TIFY7/JAZ9 interaction. Interacts with and suppresses RHD6 and RSL1 transcription factor activities to negatively regulate jasmonate-stimulated root hair development. This Arabidopsis thaliana (Mouse-ear cress) protein is Protein TIFY 7 (TIFY7).